Consider the following 80-residue polypeptide: Large ribosomal subunit protein bL31 (80 aa).

The Zn(2+) site is built by cysteine 16, cysteine 18, cysteine 36, and cysteine 39.

Belongs to the bacterial ribosomal protein bL31 family. Type A subfamily. Part of the 50S ribosomal subunit. It depends on Zn(2+) as a cofactor.

In terms of biological role, binds the 23S rRNA. This chain is Large ribosomal subunit protein bL31, found in Methylacidiphilum infernorum (isolate V4) (Methylokorus infernorum (strain V4)).